The primary structure comprises 251 residues: MGDTGTLVLLRHGESDWNARNLFTGWVDVGLTEKGRAEAVRSGELLAEQDLLPDVLYTSLLRRAITTAHLALDSADRLWIPVRRSWRLNERHYGALQGLDKAETKARYGEEQFMAWRRSYDTPPPLIEKGSEFSQDADPRYANIDGGPLTECLADVVARFLPYFTDVIVGDLRAGKTVLIVAHGNSLRALVKHLDQMSDEDIVGLNIPTGIPLRYDLDERLQPVVPGGTYLDPEAAAAGAAAVASQGAAKA.

Substrate contacts are provided by residues 11–18 (RHGESDWN), 24–25 (TG), Arg63, 90–93 (ERHY), Lys101, 117–118 (RR), and 184–185 (GN). The active-site Tele-phosphohistidine intermediate is His12. Glu90 (proton donor/acceptor) is an active-site residue.

The protein belongs to the phosphoglycerate mutase family. BPG-dependent PGAM subfamily.

It catalyses the reaction (2R)-2-phosphoglycerate = (2R)-3-phosphoglycerate. The protein operates within carbohydrate degradation; glycolysis; pyruvate from D-glyceraldehyde 3-phosphate: step 3/5. Its function is as follows. Catalyzes the interconversion of 2-phosphoglycerate and 3-phosphoglycerate. The polypeptide is 2,3-bisphosphoglycerate-dependent phosphoglycerate mutase (Mycobacterium ulcerans (strain Agy99)).